The primary structure comprises 249 residues: Phosphonates import ATP-binding protein PhnC (249 aa).

The ABC transporter domain occupies 2–246; the sequence is IEFKKVEKVW…KLNESKLEEI (245 aa). 35–42 provides a ligand contact to ATP; that stretch reads GLSGAGKT.

It belongs to the ABC transporter superfamily. Phosphonates importer (TC 3.A.1.9.1) family. As to quaternary structure, the complex is composed of two ATP-binding proteins (PhnC), two transmembrane proteins (PhnE) and a solute-binding protein (PhnD).

The protein localises to the cell membrane. The enzyme catalyses phosphonate(out) + ATP + H2O = phosphonate(in) + ADP + phosphate + H(+). Part of the ABC transporter complex PhnCDE involved in phosphonates import. Responsible for energy coupling to the transport system. This chain is Phosphonates import ATP-binding protein PhnC, found in Mesoplasma florum (strain ATCC 33453 / NBRC 100688 / NCTC 11704 / L1) (Acholeplasma florum).